The primary structure comprises 2149 residues: Non-reducing polyketide synthase PvBS090_009107 (2149 aa).

The N-terminal acylcarrier protein transacylase domain (SAT) stretch occupies residues 8 to 244; sequence YLFGDQTGEF…VRVPVHAPYH (237 aa). Residues 375–806 form the Ketosynthase family 3 (KS3) domain; sequence QSKIAIIGLS…GGNTALLIED (432 aa). Catalysis depends on for beta-ketoacyl synthase activity residues Cys547, His682, and His724. The tract at residues 911–1231 is malonyl-CoA:ACP transacylase (MAT) domain; the sequence is FVFTGQGAQY…LSAIYLAGVD (321 aa). The For acyl/malonyl transferase activity role is filled by Ser1000. Residues 1290-1604 form a product template (PT) domain region; the sequence is TTSVQRIVET…RQVLNTVLPP (315 aa). Positions 1294–1426 are N-terminal hotdog fold; sequence QRIVETRDEG…CLVKFSDTHL (133 aa). The PKS/mFAS DH domain maps to 1294 to 1599; the sequence is QRIVETRDEG…FQGVPRQVLN (306 aa). His1326 serves as the catalytic Proton acceptor; for dehydratase activity. Residues 1454-1599 are C-terminal hotdog fold; sequence SHRMHRGMFY…FQGVPRQVLN (146 aa). Residue Asp1512 is the Proton donor; for dehydratase activity of the active site. The segment at 1604–1631 is disordered; it reads PAGGSKAAPRTTARAVPPPPINVEKPKS. A Carrier 1 domain is found at 1649 to 1726; sequence SAGPSVLVQA…DLKQLLSQAS (78 aa). Ser1686 carries the O-(pantetheine 4'-phosphoryl)serine modification. Composition is skewed to low complexity over residues 1722–1731 and 1744–1755; these read LSQASPSDSS and SSSTEPSTPGTP. Residues 1722-1763 are disordered; that stretch reads LSQASPSDSSDSSEESHYSFRDSSSTEPSTPGTPAFFSPKRG. The 78-residue stretch at 1769–1846 folds into the Carrier 2 domain; sequence VGESETIKTI…AVETALDLKP (78 aa). Ser1806 is modified (O-(pantetheine 4'-phosphoryl)serine). The tract at residues 1875–2147 is thioesterase (TE) domain; sequence STHPPATSIL…KLSAFIGRAM (273 aa). Catalysis depends on Ser1965, which acts as the For thioesterase activity.

The catalysed reaction is 6 malonyl-CoA + acetyl-CoA + 6 H(+) = naphtopyrone YWA1 + 6 CO2 + 7 CoA + H2O. Its pathway is secondary metabolite biosynthesis. The protein operates within pigment biosynthesis. Functionally, non-reducing polyketide synthase; part of the gene cluster 24 that mediates the biosynthesis of a pigment with an aromatic structure protecting the pigmented fungus from both ionizing and non-ionizing radiations based on a mechanism similar to melanin, that is, free radical quenching and spherical spatial arrangement. Catalyzes the biosynthesis of the gamma-naphthopyrone precursor YWA1, via condensation of one acetyl-CoA starter unit with 6 malonyl-CoA units. YWA1 is probably further processed by the additional enzymes present within the cluster 24, however these additional steps have not been characterized yet. YWA1 is not converted to DHN-melanin in Byssochlamys spectabilis since the use of the DHN-melanin pathway inhibitor pyroquilon does not result in a loss of pigmentation. The polypeptide is Non-reducing polyketide synthase PvBS090_009107 (Byssochlamys spectabilis (Paecilomyces variotii)).